A 1399-amino-acid polypeptide reads, in one-letter code: DNA-directed RNA polymerase subunit beta' (1399 aa).

Zn(2+) is bound by residues Cys-70, Cys-72, Cys-85, and Cys-88. Residues Asp-460, Asp-462, and Asp-464 each coordinate Mg(2+). Positions 814, 888, 895, and 898 each coordinate Zn(2+).

Belongs to the RNA polymerase beta' chain family. As to quaternary structure, the RNAP catalytic core consists of 2 alpha, 1 beta, 1 beta' and 1 omega subunit. When a sigma factor is associated with the core the holoenzyme is formed, which can initiate transcription. Requires Mg(2+) as cofactor. The cofactor is Zn(2+).

It catalyses the reaction RNA(n) + a ribonucleoside 5'-triphosphate = RNA(n+1) + diphosphate. Its function is as follows. DNA-dependent RNA polymerase catalyzes the transcription of DNA into RNA using the four ribonucleoside triphosphates as substrates. The protein is DNA-directed RNA polymerase subunit beta' of Pseudomonas syringae pv. syringae (strain B728a).